The primary structure comprises 124 residues: Small ribosomal subunit protein uS12 (124 aa).

D89 bears the 3-methylthioaspartic acid mark. The disordered stretch occupies residues 105–124 (TGVDSRMQGRSKYGTKKPKK).

It belongs to the universal ribosomal protein uS12 family. In terms of assembly, part of the 30S ribosomal subunit. Contacts proteins S8 and S17. May interact with IF1 in the 30S initiation complex.

In terms of biological role, with S4 and S5 plays an important role in translational accuracy. Interacts with and stabilizes bases of the 16S rRNA that are involved in tRNA selection in the A site and with the mRNA backbone. Located at the interface of the 30S and 50S subunits, it traverses the body of the 30S subunit contacting proteins on the other side and probably holding the rRNA structure together. The combined cluster of proteins S8, S12 and S17 appears to hold together the shoulder and platform of the 30S subunit. In Vesicomyosocius okutanii subsp. Calyptogena okutanii (strain HA), this protein is Small ribosomal subunit protein uS12.